A 397-amino-acid polypeptide reads, in one-letter code: S-adenosylmethionine synthase (397 aa).

ATP is bound at residue His-17. Asp-19 provides a ligand contact to Mg(2+). Glu-45 serves as a coordination point for K(+). L-methionine is bound by residues Glu-58 and Gln-101. The tract at residues 101–111 (QSPDIAQGVDK) is flexible loop. Residues 176 to 178 (DGK), 243 to 244 (RF), Asp-252, 258 to 259 (RK), and Lys-279 each bind ATP. Asp-252 lines the L-methionine pocket. Lys-283 lines the L-methionine pocket.

The protein belongs to the AdoMet synthase family. In terms of assembly, homotetramer; dimer of dimers. Mg(2+) is required as a cofactor. K(+) serves as cofactor.

It is found in the cytoplasm. It carries out the reaction L-methionine + ATP + H2O = S-adenosyl-L-methionine + phosphate + diphosphate. Its pathway is amino-acid biosynthesis; S-adenosyl-L-methionine biosynthesis; S-adenosyl-L-methionine from L-methionine: step 1/1. In terms of biological role, catalyzes the formation of S-adenosylmethionine (AdoMet) from methionine and ATP. The overall synthetic reaction is composed of two sequential steps, AdoMet formation and the subsequent tripolyphosphate hydrolysis which occurs prior to release of AdoMet from the enzyme. This chain is S-adenosylmethionine synthase, found in Staphylococcus aureus (strain USA300).